The following is a 327-amino-acid chain: tRNA dimethylallyltransferase (327 aa).

14–21 (GPTASGKT) provides a ligand contact to ATP. 16 to 21 (TASGKT) serves as a coordination point for substrate. Interaction with substrate tRNA regions lie at residues 39–42 (DSAL) and 163–167 (QRIQR).

This sequence belongs to the IPP transferase family. In terms of assembly, monomer. Requires Mg(2+) as cofactor.

It carries out the reaction adenosine(37) in tRNA + dimethylallyl diphosphate = N(6)-dimethylallyladenosine(37) in tRNA + diphosphate. In terms of biological role, catalyzes the transfer of a dimethylallyl group onto the adenine at position 37 in tRNAs that read codons beginning with uridine, leading to the formation of N6-(dimethylallyl)adenosine (i(6)A). The polypeptide is tRNA dimethylallyltransferase (Xanthomonas campestris pv. campestris (strain 8004)).